The primary structure comprises 312 residues: NADH-ubiquinone oxidoreductase chain 1 (312 aa).

The next 8 membrane-spanning stretches (helical) occupy residues F3–F23, I77–V97, L104–G124, L150–F170, I174–L194, L226–F246, D250–A270, and C289–F309.

This sequence belongs to the complex I subunit 1 family.

Its subcellular location is the mitochondrion inner membrane. The catalysed reaction is a ubiquinone + NADH + 5 H(+)(in) = a ubiquinol + NAD(+) + 4 H(+)(out). Functionally, core subunit of the mitochondrial membrane respiratory chain NADH dehydrogenase (Complex I) that is believed to belong to the minimal assembly required for catalysis. Complex I functions in the transfer of electrons from NADH to the respiratory chain. The immediate electron acceptor for the enzyme is believed to be ubiquinone. In Drosophila subobscura (Fruit fly), this protein is NADH-ubiquinone oxidoreductase chain 1 (mt:ND1).